Here is a 212-residue protein sequence, read N- to C-terminus: ATP phosphoribosyltransferase (212 aa).

The protein belongs to the ATP phosphoribosyltransferase family. Short subfamily. Heteromultimer composed of HisG and HisZ subunits.

Its subcellular location is the cytoplasm. It carries out the reaction 1-(5-phospho-beta-D-ribosyl)-ATP + diphosphate = 5-phospho-alpha-D-ribose 1-diphosphate + ATP. It functions in the pathway amino-acid biosynthesis; L-histidine biosynthesis; L-histidine from 5-phospho-alpha-D-ribose 1-diphosphate: step 1/9. Functionally, catalyzes the condensation of ATP and 5-phosphoribose 1-diphosphate to form N'-(5'-phosphoribosyl)-ATP (PR-ATP). Has a crucial role in the pathway because the rate of histidine biosynthesis seems to be controlled primarily by regulation of HisG enzymatic activity. The sequence is that of ATP phosphoribosyltransferase (hisG) from Halalkalibacterium halodurans (strain ATCC BAA-125 / DSM 18197 / FERM 7344 / JCM 9153 / C-125) (Bacillus halodurans).